We begin with the raw amino-acid sequence, 105 residues long: Insulin-like peptide 7 (105 aa).

An N-terminal signal peptide occupies residues 1–18; it reads MPPIILVFFLVLIPASQQ. The propeptide occupies 19-57; sequence YPFSLESLNDQIINEEVIEYMLENSIRSSRTRRVPDEKK. Disulfide bonds link cysteine 61–cysteine 90, cysteine 73–cysteine 103, cysteine 77–cysteine 104, and cysteine 89–cysteine 94.

The protein belongs to the insulin family.

It localises to the secreted. Functionally, insulin-like peptide which plays a role in ageing as a consequence of daf-16 activity. This is Insulin-like peptide 7 from Caenorhabditis elegans.